The primary structure comprises 194 residues: MLVPTVIEQTARGERAYDIYSRLLKDRIIMLSGDVNDQMANSIIAQLLFLDAQDNTKDIYMYINSPGGVITSGMAIVDTMNFIKSPVSTIATGMAASMASIILAEGEKGKRFALPHATVLIHQPLGGAQGQATEIQIAAEEILKTRKMINEILAKDSGQDIETIKRDTERDHYMTAQEAKDYGLIDDIMVNQNK.

Ser-97 functions as the Nucleophile in the catalytic mechanism. Residue His-122 is part of the active site.

Belongs to the peptidase S14 family. In terms of assembly, fourteen ClpP subunits assemble into 2 heptameric rings which stack back to back to give a disk-like structure with a central cavity, resembling the structure of eukaryotic proteasomes.

The protein resides in the cytoplasm. It catalyses the reaction Hydrolysis of proteins to small peptides in the presence of ATP and magnesium. alpha-casein is the usual test substrate. In the absence of ATP, only oligopeptides shorter than five residues are hydrolyzed (such as succinyl-Leu-Tyr-|-NHMec, and Leu-Tyr-Leu-|-Tyr-Trp, in which cleavage of the -Tyr-|-Leu- and -Tyr-|-Trp bonds also occurs).. In terms of biological role, cleaves peptides in various proteins in a process that requires ATP hydrolysis. Has a chymotrypsin-like activity. Plays a major role in the degradation of misfolded proteins. This Lactobacillus delbrueckii subsp. bulgaricus (strain ATCC BAA-365 / Lb-18) protein is ATP-dependent Clp protease proteolytic subunit.